The sequence spans 253 residues: Proteasome subunit alpha type-3 (253 aa).

Residues 230–253 are disordered; that stretch reads ELTEKARKAGDAANKDEDSDNETH. The span at 231–253 shows a compositional bias: basic and acidic residues; that stretch reads LTEKARKAGDAANKDEDSDNETH. The residue at position 248 (Ser248) is a Phosphoserine.

This sequence belongs to the peptidase T1A family. In terms of assembly, the 26S proteasome consists of a 20S proteasome core and two 19S regulatory subunits. The 20S proteasome core is composed of 28 subunits that are arranged in four stacked rings, resulting in a barrel-shaped structure. The two end rings are each formed by seven alpha subunits, and the two central rings are each formed by seven beta subunits. The catalytic chamber with the active sites is on the inside of the barrel. Interacts with ntc.

The protein localises to the cytoplasm. It is found in the nucleus. In terms of biological role, the proteasome is a multicatalytic proteinase complex which is characterized by its ability to cleave peptides with Arg, Phe, Tyr, Leu, and Glu adjacent to the leaving group at neutral or slightly basic pH. The proteasome has an ATP-dependent proteolytic activity. This is Proteasome subunit alpha type-3 (Prosalpha7) from Drosophila melanogaster (Fruit fly).